The sequence spans 203 residues: Thymidylate kinase (203 aa).

10–17 (GIDGAGKS) provides a ligand contact to ATP.

Belongs to the thymidylate kinase family.

It catalyses the reaction dTMP + ATP = dTDP + ADP. Its function is as follows. Phosphorylation of dTMP to form dTDP in both de novo and salvage pathways of dTTP synthesis. This chain is Thymidylate kinase, found in Cupriavidus necator (strain ATCC 17699 / DSM 428 / KCTC 22496 / NCIMB 10442 / H16 / Stanier 337) (Ralstonia eutropha).